Here is a 76-residue protein sequence, read N- to C-terminus: U1-cyrtautoxin-As1d (76 aa).

4 disulfides stabilise this stretch: C23-C37, C30-C51, C36-C66, and C69-C76.

It belongs to the neurotoxin 21 family. In terms of tissue distribution, expressed by the venom gland.

It localises to the secreted. Its function is as follows. Neurotoxin with probable ion channel impairing activity. In vivo, is both paralytic and lethal, when injected into lepidopteran larvae. This chain is U1-cyrtautoxin-As1d, found in Apomastus schlingeri (Trap-door spider).